Consider the following 174-residue polypeptide: Large ribosomal subunit protein uL10 (174 aa).

It belongs to the universal ribosomal protein uL10 family. Part of the ribosomal stalk of the 50S ribosomal subunit. The N-terminus interacts with L11 and the large rRNA to form the base of the stalk. The C-terminus forms an elongated spine to which L12 dimers bind in a sequential fashion forming a multimeric L10(L12)X complex.

In terms of biological role, forms part of the ribosomal stalk, playing a central role in the interaction of the ribosome with GTP-bound translation factors. This chain is Large ribosomal subunit protein uL10, found in Syntrophus aciditrophicus (strain SB).